The following is a 560-amino-acid chain: Dihydroxy-acid dehydratase (560 aa).

A Mg(2+)-binding site is contributed by D80. Position 121 (C121) interacts with [2Fe-2S] cluster. Positions 122 and 123 each coordinate Mg(2+). K123 carries the N6-carboxylysine modification. C194 lines the [2Fe-2S] cluster pocket. E447 contributes to the Mg(2+) binding site. The active-site Proton acceptor is S473.

This sequence belongs to the IlvD/Edd family. Homodimer. The cofactor is [2Fe-2S] cluster. Requires Mg(2+) as cofactor.

The catalysed reaction is (2R)-2,3-dihydroxy-3-methylbutanoate = 3-methyl-2-oxobutanoate + H2O. It carries out the reaction (2R,3R)-2,3-dihydroxy-3-methylpentanoate = (S)-3-methyl-2-oxopentanoate + H2O. It participates in amino-acid biosynthesis; L-isoleucine biosynthesis; L-isoleucine from 2-oxobutanoate: step 3/4. It functions in the pathway amino-acid biosynthesis; L-valine biosynthesis; L-valine from pyruvate: step 3/4. Functionally, functions in the biosynthesis of branched-chain amino acids. Catalyzes the dehydration of (2R,3R)-2,3-dihydroxy-3-methylpentanoate (2,3-dihydroxy-3-methylvalerate) into 2-oxo-3-methylpentanoate (2-oxo-3-methylvalerate) and of (2R)-2,3-dihydroxy-3-methylbutanoate (2,3-dihydroxyisovalerate) into 2-oxo-3-methylbutanoate (2-oxoisovalerate), the penultimate precursor to L-isoleucine and L-valine, respectively. The protein is Dihydroxy-acid dehydratase of Chloroherpeton thalassium (strain ATCC 35110 / GB-78).